Consider the following 285-residue polypeptide: Tryptophan synthase alpha chain (285 aa).

Catalysis depends on proton acceptor residues Glu53 and Asp64.

It belongs to the TrpA family. In terms of assembly, tetramer of two alpha and two beta chains.

The enzyme catalyses (1S,2R)-1-C-(indol-3-yl)glycerol 3-phosphate + L-serine = D-glyceraldehyde 3-phosphate + L-tryptophan + H2O. It functions in the pathway amino-acid biosynthesis; L-tryptophan biosynthesis; L-tryptophan from chorismate: step 5/5. In terms of biological role, the alpha subunit is responsible for the aldol cleavage of indoleglycerol phosphate to indole and glyceraldehyde 3-phosphate. The chain is Tryptophan synthase alpha chain from Bordetella bronchiseptica (strain ATCC BAA-588 / NCTC 13252 / RB50) (Alcaligenes bronchisepticus).